Here is a 277-residue protein sequence, read N- to C-terminus: Sulfur carrier protein FdhD (277 aa).

The active-site Cysteine persulfide intermediate is the Cys-121. Position 260 to 265 (260 to 265) interacts with Mo-bis(molybdopterin guanine dinucleotide); it reads FCKPGR.

This sequence belongs to the FdhD family.

It localises to the cytoplasm. Its function is as follows. Required for formate dehydrogenase (FDH) activity. Acts as a sulfur carrier protein that transfers sulfur from IscS to the molybdenum cofactor prior to its insertion into FDH. This is Sulfur carrier protein FdhD from Escherichia coli O6:K15:H31 (strain 536 / UPEC).